We begin with the raw amino-acid sequence, 354 residues long: Guanine nucleotide-binding protein G(i) subunit alpha-1 (354 aa).

Gly2 carries N-myristoyl glycine lipidation. Cys3 is lipidated: S-palmitoyl cysteine. Residues 32–354 (REVKLLLLGA…KNNLKDCGLF (323 aa)) enclose the G-alpha domain. Residues 35-48 (KLLLLGAGESGKST) are G1 motif. Residues 43–48 (ESGKST), 150–151 (DS), and 175–178 (LRTR) each bind GTP. Mg(2+) is bound at residue Ser47. A G2 motif region spans residues 173 to 181 (DVLRTRVKT). Mg(2+) is bound at residue Thr181. Residues 196 to 205 (FKMFDVGGQR) are G3 motif. Residues 200–204 (DVGGQ), 269–272 (NKKD), and Ala326 each bind GTP. The G4 motif stretch occupies residues 265-272 (ILFLNKKD). The interval 324-329 (TCATDT) is G5 motif.

Belongs to the G-alpha family. G(i/o/t/z) subfamily. In terms of assembly, heterotrimeric G proteins are composed of 3 units; alpha, beta and gamma. The alpha chain contains the guanine nucleotide binding site. Part of a spindle orientation complex at least composed of GNAI1, GPSM2 and NUMA1. Identified in complex with the beta subunit GNB1 and the gamma subunit GNG1. Identified in complex with the beta subunit GNB1 and the gamma subunit GNG2. Component of the TAS2R14-GNAI1 complex, consisting of TAS2R14, GNAI1, GNB1 and GNG2; within the complex interacts with TAS2R14; this complex plays a role in the perception of bitterness. GTP binding causes dissociation of the heterotrimer, liberating the individual subunits so that they can interact with downstream effector proteins. Interacts (GDP-bound form) with GPSM1; this inhibits guanine nucleotide exchange and GTP binding. Interacts (GDP-bound form) with GPSM2 (via GoLoco domains); this inhibits guanine nucleotide exchange. Interacts with RGS10; this strongly enhances GTP hydrolysis. Interacts with RGS1 and RGS16; this strongly enhances GTPase activity. Interacts with RGS4. Interacts with RGS12. Interacts (via active GTP- or inactive GDP-bound forms) with RGS14 (via RGS and GoLoco domains). Interacts with RGS3, RGS6, RGS7, RGS8, RGS17, RGS18 and RGS20 (in vitro). Interacts (GDP-bound form) with RIC8A (via C-terminus); promoting GNAI1 folding and association with the plasma membrane. Interacts (inactive GDP-bound form) with NUCB1 (via GBA motif); the interaction leads to activation of GNAI1. Interacts (inactive GDP-bound form) with CCDC88C/DAPLE (via GBA motif); the interaction leads to activation of GNAI1. Interacts (inactive GDP-bound form) with CCDC8A/GIV (via GBA motif). Interacts with GPR15. Myristoylation at Gly-2 is required for membrane anchoring before palmitoylation. Post-translationally, palmitoylation at Cys-3 varies with membrane lipid composition.

The protein resides in the nucleus. It is found in the cytoplasm. Its subcellular location is the cell membrane. It localises to the cytoskeleton. The protein localises to the microtubule organizing center. The protein resides in the centrosome. It is found in the cell cortex. Its subcellular location is the membrane. In terms of biological role, guanine nucleotide-binding proteins (G proteins) function as transducers downstream of G protein-coupled receptors (GPCRs) in numerous signaling cascades. The alpha chain contains the guanine nucleotide binding site and alternates between an active, GTP-bound state and an inactive, GDP-bound state. Signaling by an activated GPCR promotes GDP release and GTP binding. The alpha subunit has a low GTPase activity that converts bound GTP to GDP, thereby terminating the signal. Both GDP release and GTP hydrolysis are modulated by numerous regulatory proteins. Signaling is mediated via effector proteins, such as adenylate cyclase. Inhibits adenylate cyclase activity of ADCY1, ADCY5 and ADCY6, leading to decreased intracellular cAMP levels. The inactive GDP-bound form prevents the association of RGS14 with centrosomes and is required for the translocation of RGS14 from the cytoplasm to the plasma membrane. Required for normal cytokinesis during mitosis. Required for cortical dynein-dynactin complex recruitment during metaphase. This Pongo abelii (Sumatran orangutan) protein is Guanine nucleotide-binding protein G(i) subunit alpha-1 (GNAI1).